Here is a 697-residue protein sequence, read N- to C-terminus: Ion-translocating oxidoreductase complex subunit C (697 aa).

4Fe-4S ferredoxin-type domains are found at residues 366 to 397 (AEMGLSEPEQSCIRCGLCVDACPAGLLPQQLY) and 407 to 436 (KARNHNLFDCIECGACAYVCPSNIPLVQYY). [4Fe-4S] cluster-binding residues include cysteine 377, cysteine 380, cysteine 383, cysteine 387, cysteine 416, cysteine 419, cysteine 422, and cysteine 426. The segment at 576–674 (AQLESEPVKS…APEEDPRKAA (99 aa)) is disordered. The span at 581-596 (EPVKSESEAPEEDPRK) shows a compositional bias: basic and acidic residues. Residues 597-615 (AAVAAAIARVKAKKAAQAQ) are compositionally biased toward low complexity. The segment covering 619–634 (EPVKSESEAPEEDPRK) has biased composition (basic and acidic residues). Over residues 635-653 (AAVAAAIARVKAKKAAQAQ) the composition is skewed to low complexity. The span at 657-672 (EPVKSESEAPEEDPRK) shows a compositional bias: basic and acidic residues.

This sequence belongs to the 4Fe4S bacterial-type ferredoxin family. RnfC subfamily. The complex is composed of six subunits: RnfA, RnfB, RnfC, RnfD, RnfE and RnfG. It depends on [4Fe-4S] cluster as a cofactor.

The protein resides in the cell inner membrane. In terms of biological role, part of a membrane-bound complex that couples electron transfer with translocation of ions across the membrane. This chain is Ion-translocating oxidoreductase complex subunit C, found in Yersinia enterocolitica serotype O:8 / biotype 1B (strain NCTC 13174 / 8081).